The primary structure comprises 807 residues: Glycerol-3-phosphate acyltransferase (807 aa).

Residues 308–313 (CHRSHM) carry the HXXXXD motif motif.

The protein belongs to the GPAT/DAPAT family.

The protein resides in the cell inner membrane. It carries out the reaction sn-glycerol 3-phosphate + an acyl-CoA = a 1-acyl-sn-glycero-3-phosphate + CoA. It functions in the pathway phospholipid metabolism; CDP-diacylglycerol biosynthesis; CDP-diacylglycerol from sn-glycerol 3-phosphate: step 1/3. In Shewanella denitrificans (strain OS217 / ATCC BAA-1090 / DSM 15013), this protein is Glycerol-3-phosphate acyltransferase.